The sequence spans 1132 residues: Sentrin-specific protease 6 (1132 aa).

2 disordered regions span residues serine 23–asparagine 51 and leucine 327–threonine 388. Serine 41, serine 355, serine 356, serine 371, and serine 373 each carry phosphoserine. Phosphothreonine is present on threonine 436. Lysine 648 participates in a covalent cross-link: Glycyl lysine isopeptide (Lys-Gly) (interchain with G-Cter in SUMO2). The interval isoleucine 686–glutamate 1132 is protease. Active-site residues include histidine 785 and aspartate 936. The residue at position 938 (serine 938) is a Phosphoserine. Residue cysteine 1049 is part of the active site. Position 1131 is a phosphoserine (serine 1131).

It belongs to the peptidase C48 family. Interacts with RXRA. Forms a complex with KAT5-TIP60 and UBE2I in response to UV irradiation. Interacts with RPA1 to maintain it in hyposumoylated state during S phase preventing DNA repair initiation.

Its subcellular location is the nucleus. It functions in the pathway protein modification; protein sumoylation. Its function is as follows. Protease that deconjugates SUMO1, SUMO2 and SUMO3 from targeted proteins. Processes preferentially poly-SUMO2 and poly-SUMO3 chains, but does not efficiently process SUMO1, SUMO2 and SUMO3 precursors. Deconjugates SUMO1 from RXRA, leading to transcriptional activation. Involved in chromosome alignment and spindle assembly, by regulating the kinetochore CENPH-CENPI-CENPK complex. Desumoylates PML and CENPI, protecting them from degradation by the ubiquitin ligase RNF4, which targets polysumoylated proteins for proteasomal degradation. Also desumoylates RPA1, thus preventing recruitment of RAD51 to the DNA damage foci to initiate DNA repair through homologous recombination. This is Sentrin-specific protease 6 (Senp6) from Mus musculus (Mouse).